Reading from the N-terminus, the 288-residue chain is Shikimate dehydrogenase (NADP(+)) (288 aa).

Shikimate is bound by residues Ser-22–Ser-24 and Thr-69. Lys-73 serves as the catalytic Proton acceptor. Shikimate-binding residues include Asn-94 and Asp-110. Residues Gly-131–Ala-135 and Leu-228 contribute to the NADP(+) site. Position 230 (Tyr-230) interacts with shikimate. Gly-251 is a binding site for NADP(+).

It belongs to the shikimate dehydrogenase family. Homodimer.

It catalyses the reaction shikimate + NADP(+) = 3-dehydroshikimate + NADPH + H(+). Its pathway is metabolic intermediate biosynthesis; chorismate biosynthesis; chorismate from D-erythrose 4-phosphate and phosphoenolpyruvate: step 4/7. Involved in the biosynthesis of the chorismate, which leads to the biosynthesis of aromatic amino acids. Catalyzes the reversible NADPH linked reduction of 3-dehydroshikimate (DHSA) to yield shikimate (SA). The sequence is that of Shikimate dehydrogenase (NADP(+)) from Synechococcus sp. (strain JA-2-3B'a(2-13)) (Cyanobacteria bacterium Yellowstone B-Prime).